We begin with the raw amino-acid sequence, 321 residues long: Protein-L-histidine N-pros-methyltransferase (321 aa).

The N-terminal stretch at 1–24 (MRLWLCWLGCYTLLLWALRRRMWA) is a signal peptide. Asn-89 carries an N-linked (GlcNAc...) asparagine glycan. Positions 177, 213, and 298 each coordinate S-adenosyl-L-homocysteine.

It belongs to the METTL9 family.

Its subcellular location is the endoplasmic reticulum. It localises to the mitochondrion. It catalyses the reaction L-histidyl-[protein] + S-adenosyl-L-methionine = N(pros)-methyl-L-histidyl-[protein] + S-adenosyl-L-homocysteine + H(+). In terms of biological role, protein-histidine N-methyltransferase that specifically catalyzes 1-methylhistidine (pros-methylhistidine) methylation of target proteins. Mediates methylation of proteins with a His-x-His (HxH) motif (where 'x' is preferably a small amino acid); 1-methylhistidine modification may affect the binding of zinc and other metals to its target proteins. In Gallus gallus (Chicken), this protein is Protein-L-histidine N-pros-methyltransferase.